We begin with the raw amino-acid sequence, 111 residues long: Large ribosomal subunit protein eL42 (111 aa).

Zn(2+) contacts are provided by C12, C15, C72, and C77.

The protein belongs to the eukaryotic ribosomal protein eL42 family. In terms of assembly, component of the large ribosomal subunit.

Its subcellular location is the cytoplasm. Its function is as follows. Component of the large ribosomal subunit. The ribosome is a large ribonucleoprotein complex responsible for the synthesis of proteins in the cell. In Oryctolagus cuniculus (Rabbit), this protein is Large ribosomal subunit protein eL42 (RPL36A).